We begin with the raw amino-acid sequence, 131 residues long: Small ribosomal subunit protein uS8 (131 aa).

The protein belongs to the universal ribosomal protein uS8 family. In terms of assembly, part of the 30S ribosomal subunit. Contacts proteins S5 and S12.

One of the primary rRNA binding proteins, it binds directly to 16S rRNA central domain where it helps coordinate assembly of the platform of the 30S subunit. This Wolbachia sp. subsp. Brugia malayi (strain TRS) protein is Small ribosomal subunit protein uS8.